Reading from the N-terminus, the 498-residue chain is ADP,ATP carrier protein 1 (498 aa).

Topologically, residues 1–33 are cytoplasmic; that stretch reads MNNPKNDNYLSELSKVIWPIERYENKKFLPMAF. The helical transmembrane segment at 34–54 threads the bilayer; sequence MMFCILLNYSTLRSIKDGFVV. Cysteine 37 and cysteine 85 form a disulfide bridge. The Extracellular segment spans residues 55 to 67; the sequence is TDIGAEAISFLKT. The chain crosses the membrane as a helical span at residues 68-88; the sequence is YIVLPSAVIAMVIYVKLCDIL. Topologically, residues 89–92 are cytoplasmic; that stretch reads KQEN. Residues 93–113 traverse the membrane as a helical segment; it reads VFYVITSFFLGYFALFAFVLY. Over 114–147 the chain is Extracellular; the sequence is PYPDLVHPDPETIESWSVAYPNVKWFIRIVGKWS. A helical membrane pass occupies residues 148-168; the sequence is FASFYTMAELWGTMMLSLLFW. Over 169–184 the chain is Cytoplasmic; that stretch reads QFANQITKTDEAKRFY. The helical transmembrane segment at 185–205 threads the bilayer; it reads SMFGLLANLALPVTSVIIGYC. Over 206–218 the chain is Extracellular; the sequence is LHEKTQIVAEHLK. Residues 219–239 traverse the membrane as a helical segment; it reads FVPLFVIMITSSFLVILTYRW. The Cytoplasmic portion of the chain corresponds to 240-279; sequence MNKNVLTDPRLYDPALVKEKKAKAKMSLIDSFKMIFTSKY. A helical transmembrane segment spans residues 280 to 300; sequence VGYIALLLIAYGVSVNLVEGV. Residues 301 to 320 lie on the Extracellular side of the membrane; the sequence is WKSKVKELYPTKEAYTIYMG. Residues 321–341 traverse the membrane as a helical segment; sequence KFQFYQGWVAIAFMLIGSNIL. Residues 342–348 are Cytoplasmic-facing; that stretch reads RKVSWLT. Residues 349–369 form a helical membrane-spanning segment; it reads AAMITPLMMLITGAAFFAFIF. The Extracellular portion of the chain corresponds to 370–379; it reads FDSVIAMHLT. A helical transmembrane segment spans residues 380 to 400; sequence GILASGPLALAVMIGMIQNVL. The Cytoplasmic segment spans residues 401-438; sequence SKGVKYSLFDATKNMAYIPLDKDLRVKGQAAVEVIGGR. Residue 436–442 coordinates ATP; the sequence is GGRFGKS. A helical transmembrane segment spans residues 439-459; the sequence is FGKSGGAIIQSTFFILFPAFG. The Extracellular segment spans residues 460–465; it reads FVEATP. A helical transmembrane segment spans residues 466–486; that stretch reads YFASIFFVIVILWIYAVKGLN. Over 487–498 the chain is Cytoplasmic; the sequence is KEYKVLVNKTEK.

This sequence belongs to the ADP/ATP translocase tlc family.

It localises to the cell membrane. Functionally, provides the rickettsial cell with host ATP in exchange for rickettsial ADP. This is an obligate exchange system. This energy acquiring activity is an important component of rickettsial parasitism. The protein is ADP,ATP carrier protein 1 (tlcA) of Rickettsia conorii (strain ATCC VR-613 / Malish 7).